A 258-amino-acid chain; its full sequence is Imidazole glycerol phosphate synthase subunit HisF (258 aa).

Active-site residues include D12 and D131.

Belongs to the HisA/HisF family. In terms of assembly, heterodimer of HisH and HisF.

The protein localises to the cytoplasm. It catalyses the reaction 5-[(5-phospho-1-deoxy-D-ribulos-1-ylimino)methylamino]-1-(5-phospho-beta-D-ribosyl)imidazole-4-carboxamide + L-glutamine = D-erythro-1-(imidazol-4-yl)glycerol 3-phosphate + 5-amino-1-(5-phospho-beta-D-ribosyl)imidazole-4-carboxamide + L-glutamate + H(+). It functions in the pathway amino-acid biosynthesis; L-histidine biosynthesis; L-histidine from 5-phospho-alpha-D-ribose 1-diphosphate: step 5/9. Functionally, IGPS catalyzes the conversion of PRFAR and glutamine to IGP, AICAR and glutamate. The HisF subunit catalyzes the cyclization activity that produces IGP and AICAR from PRFAR using the ammonia provided by the HisH subunit. The polypeptide is Imidazole glycerol phosphate synthase subunit HisF (Nitrosomonas europaea (strain ATCC 19718 / CIP 103999 / KCTC 2705 / NBRC 14298)).